The primary structure comprises 328 residues: UDP-N-acetylglucosamine transporter YEA4 (328 aa).

The next 10 helical transmembrane spans lie at 1–21, 30–50, 66–86, 98–118, 122–142, 166–186, 198–218, 241–261, 274–294, and 298–318; these read MSFV…VISF, INLG…IQLP, HIPL…SVAN, IHII…WAVC, YSKL…VASL, SMFG…LSLL, WKET…LGYT, LPIA…FICI, LTLS…SVYI, and VLSV…GLYS.

This sequence belongs to the nucleotide-sugar transporter family. SLC35A subfamily.

The protein localises to the golgi apparatus membrane. Its function is as follows. Sugar transporter that specifically mediates the transport of UDP-N-acetylglucosamine (UDP-GlcNAc) from the cytosol into Golgi vesicles where glycosyltransferases function. The protein is UDP-N-acetylglucosamine transporter YEA4 (YEA4) of Kluyveromyces lactis (strain ATCC 8585 / CBS 2359 / DSM 70799 / NBRC 1267 / NRRL Y-1140 / WM37) (Yeast).